A 379-amino-acid polypeptide reads, in one-letter code: L-lactate dehydrogenase (379 aa).

In terms of domain architecture, FMN hydroxy acid dehydrogenase spans 1 to 379; sequence MIISASTDYR…LSRDSLVKIP (379 aa). Residue tyrosine 24 coordinates substrate. Residues serine 106 and glutamine 127 each coordinate FMN. Residue tyrosine 129 participates in substrate binding. Threonine 155 lines the FMN pocket. Arginine 164 is a substrate binding site. Lysine 251 contributes to the FMN binding site. The Proton acceptor role is filled by histidine 275. Arginine 278 is a binding site for substrate. 306 to 330 serves as a coordination point for FMN; sequence DSGIRTGLDVVRMLALGADCTLLGR.

It belongs to the FMN-dependent alpha-hydroxy acid dehydrogenase family. FMN serves as cofactor.

It is found in the cell inner membrane. It carries out the reaction (S)-lactate + A = pyruvate + AH2. Catalyzes the conversion of L-lactate to pyruvate. Is coupled to the respiratory chain. The protein is L-lactate dehydrogenase of Vibrio parahaemolyticus serotype O3:K6 (strain RIMD 2210633).